The chain runs to 388 residues: MIKNPKVLILTAHYGNGHVQVAKTLEQTFRQKGIEDVIVCDLFGESHPFITDITKYLYLKSYTIGKELYRLFYYGVEKIYDKKIASWYANFGRKRLKTLLQVEKPDIVINTFPIIAVPELKKQTGISIPVYNVLTDFCVHKIWIHREVDRYFVATDHVKELMVDIGVPAEQIVETGIPIRSSFELKVNPEIIYTKYQLCKNKKILLIVAGAHGVLGNVKELCQSFMSVPNLQVVVVCGKNEALKQDLLSLQKQNSDALKVFGYVENIDELFRVTSCMITKPGGITLSEAAALQVPVILYKPVPGQENENAMYFERKGAAVVIRDDSEVFAKTEALLQDDVKLLQMKEAMKSIYLPEPAGHIVDAILAENHAEPRHIPIKSPALAQSFT.

It belongs to the glycosyltransferase 28 family. UgtP subfamily.

The protein resides in the cell membrane. It carries out the reaction a 1,2-diacyl-3-O-(beta-D-glucopyranosyl)-sn-glycerol + UDP-alpha-D-glucose = a 1,2-diacyl-3-O-(beta-D-Glc-(1-&gt;6)-beta-D-Glc)-sn-glycerol + UDP + H(+). The catalysed reaction is a 1,2-diacyl-3-O-(beta-D-Glc-(1-&gt;6)-beta-D-Glc)-sn-glycerol + UDP-alpha-D-glucose = a 1,2-diacyl-3-O-(beta-D-Glc-(1-&gt;6)-beta-D-Glc-(1-&gt;6)-beta-D-Glc)-sn-glycerol + UDP + H(+). It catalyses the reaction a 1,2-diacyl-sn-glycerol + UDP-alpha-D-glucose = a 1,2-diacyl-3-O-(beta-D-glucopyranosyl)-sn-glycerol + UDP + H(+). The protein operates within glycolipid metabolism; diglucosyl-diacylglycerol biosynthesis. In terms of biological role, processive glucosyltransferase involved in the biosynthesis of both the bilayer- and non-bilayer-forming membrane glucolipids. Is able to successively transfer up to three glucosyl residues to diacylglycerol (DAG), thereby catalyzing the formation of beta-monoglucosyl-DAG (3-O-(beta-D-glucopyranosyl)-1,2-diacyl-sn-glycerol), beta-diglucosyl-DAG (3-O-(beta-D-glucopyranosyl-beta-(1-&gt;6)-D-glucopyranosyl)-1,2-diacyl-sn-glycerol) and beta-triglucosyl-DAG (3-O-(beta-D-glucopyranosyl-beta-(1-&gt;6)-D-glucopyranosyl-beta-(1-&gt;6)-D-glucopyranosyl)-1,2-diacyl-sn-glycerol). Beta-diglucosyl-DAG is the predominant glycolipid found in Bacillales and is also used as a membrane anchor for lipoteichoic acid (LTA). The chain is Processive diacylglycerol beta-glucosyltransferase from Bacillus cereus (strain ATCC 14579 / DSM 31 / CCUG 7414 / JCM 2152 / NBRC 15305 / NCIMB 9373 / NCTC 2599 / NRRL B-3711).